A 111-amino-acid chain; its full sequence is Large ribosomal subunit protein eL31 (111 aa).

The protein belongs to the eukaryotic ribosomal protein eL31 family.

This Dictyostelium discoideum (Social amoeba) protein is Large ribosomal subunit protein eL31 (rpl31).